The following is a 70-amino-acid chain: Large ribosomal subunit protein bL31 (70 aa).

4 residues coordinate Zn(2+): C16, C18, C37, and C40.

This sequence belongs to the bacterial ribosomal protein bL31 family. Type A subfamily. In terms of assembly, part of the 50S ribosomal subunit. Zn(2+) is required as a cofactor.

Functionally, binds the 23S rRNA. In Cronobacter sakazakii (strain ATCC BAA-894) (Enterobacter sakazakii), this protein is Large ribosomal subunit protein bL31.